Here is a 59-residue protein sequence, read N- to C-terminus: MAKKENRVIITLECTEARKEGASPSRYTTTKNKKNQTERLVLKKYNPSLKKHTLHKEIK.

The protein belongs to the bacterial ribosomal protein bL33 family.

The sequence is that of Large ribosomal subunit protein bL33 from Prosthecochloris aestuarii (strain DSM 271 / SK 413).